A 455-amino-acid chain; its full sequence is Kynurenine--oxoglutarate transaminase 3 (455 aa).

A substrate-binding site is contributed by G72. K117 is modified (N6-acetyllysine; alternate). At K117 the chain carries N6-succinyllysine; alternate. N219 is a substrate binding site. K281 carries the N6-(pyridoxal phosphate)lysine modification. Residue R430 coordinates substrate.

This sequence belongs to the class-I pyridoxal-phosphate-dependent aminotransferase family. In terms of assembly, homodimer. Requires pyridoxal 5'-phosphate as cofactor. As to expression, widely expressed, with higher expression levels in liver, kidney, heart and neuroendocrine tissues.

The enzyme catalyses L-kynurenine + 2-oxoglutarate = kynurenate + L-glutamate + H2O. It catalyses the reaction L-kynurenine + glyoxylate = kynurenate + glycine + H2O. The catalysed reaction is 3-hydroxy-L-kynurenine + glyoxylate = xanthurenate + glycine + H2O. It carries out the reaction an S-substituted L-cysteine + H2O = a thiol + pyruvate + NH4(+). The protein operates within amino-acid degradation; L-kynurenine degradation; kynurenate from L-kynurenine: step 1/2. Kynurenine transamination is competitively inhibited by cysteine, glutamine, histidine, methionine, leucine, or phenylalanine. Catalyzes the irreversible transamination of the L-tryptophan metabolite L-kynurenine to form kynurenic acid (KA), an intermediate in the tryptophan catabolic pathway which is also a broad spectrum antagonist of the three ionotropic excitatory amino acid receptors among others. May catalyze the beta-elimination of S-conjugates and Se-conjugates of L-(seleno)cysteine, resulting in the cleavage of the C-S or C-Se bond. Has transaminase activity towards L-kynurenine, tryptophan, phenylalanine, serine, cysteine, methionine, histidine, glutamine and asparagine with glyoxylate as an amino group acceptor (in vitro). Has lower activity with 2-oxoglutarate as amino group acceptor (in vitro). The polypeptide is Kynurenine--oxoglutarate transaminase 3 (Kyat3) (Mus musculus (Mouse)).